Consider the following 157-residue polypeptide: 6,7-dimethyl-8-ribityllumazine synthase (157 aa).

Residues Phe23, 57–59, and 81–83 contribute to the 5-amino-6-(D-ribitylamino)uracil site; these read AFE and AVI. Position 86–87 (86–87) interacts with (2S)-2-hydroxy-3-oxobutyl phosphate; sequence ST. His89 (proton donor) is an active-site residue. Phe114 contacts 5-amino-6-(D-ribitylamino)uracil. Position 128 (Arg128) interacts with (2S)-2-hydroxy-3-oxobutyl phosphate.

The protein belongs to the DMRL synthase family.

It catalyses the reaction (2S)-2-hydroxy-3-oxobutyl phosphate + 5-amino-6-(D-ribitylamino)uracil = 6,7-dimethyl-8-(1-D-ribityl)lumazine + phosphate + 2 H2O + H(+). It functions in the pathway cofactor biosynthesis; riboflavin biosynthesis; riboflavin from 2-hydroxy-3-oxobutyl phosphate and 5-amino-6-(D-ribitylamino)uracil: step 1/2. Functionally, catalyzes the formation of 6,7-dimethyl-8-ribityllumazine by condensation of 5-amino-6-(D-ribitylamino)uracil with 3,4-dihydroxy-2-butanone 4-phosphate. This is the penultimate step in the biosynthesis of riboflavin. This Desulfosudis oleivorans (strain DSM 6200 / JCM 39069 / Hxd3) (Desulfococcus oleovorans) protein is 6,7-dimethyl-8-ribityllumazine synthase.